Here is a 170-residue protein sequence, read N- to C-terminus: Pollen-specific protein C13 (170 aa).

An N-terminal signal peptide occupies residues 1 to 27 (MASVPAPATTTAAVILCLCVVLSCAAA). Disulfide bonds link cysteine 43–cysteine 114, cysteine 46–cysteine 155, and cysteine 67–cysteine 102. An N-linked (GlcNAc...) asparagine glycan is attached at asparagine 53.

This sequence belongs to the Ole e I family. As to expression, pollen.

The protein is Pollen-specific protein C13 (MGS1) of Zea mays (Maize).